Consider the following 265-residue polypeptide: Mlc titration factor A (265 aa).

The Zn(2+) site is built by H111, H148, H152, and E211.

Belongs to the MtfA family. In terms of assembly, interacts with Mlc. The cofactor is Zn(2+).

It localises to the cytoplasm. In terms of biological role, involved in the modulation of the activity of the glucose-phosphotransferase system (glucose-PTS). Interacts with the transcriptional repressor Mlc, preventing its interaction with DNA and leading to the modulation of expression of genes regulated by Mlc, including ptsG, which encodes the PTS system glucose-specific EIICB component. Its function is as follows. Shows zinc-dependent metallopeptidase activity. The chain is Mlc titration factor A from Escherichia coli (strain SMS-3-5 / SECEC).